Consider the following 688-residue polypeptide: Polyribonucleotide nucleotidyltransferase (688 aa).

Mg(2+) is bound by residues Asp484 and Asp490. The 60-residue stretch at Pro550–Ile609 folds into the KH domain. The 63-residue stretch at Asp626–Ala688 folds into the S1 motif domain.

It belongs to the polyribonucleotide nucleotidyltransferase family. The cofactor is Mg(2+).

The protein localises to the cytoplasm. The catalysed reaction is RNA(n+1) + phosphate = RNA(n) + a ribonucleoside 5'-diphosphate. Its function is as follows. Involved in mRNA degradation. Catalyzes the phosphorolysis of single-stranded polyribonucleotides processively in the 3'- to 5'-direction. This chain is Polyribonucleotide nucleotidyltransferase, found in Helicobacter pylori (strain P12).